We begin with the raw amino-acid sequence, 252 residues long: Phosphomannomutase (252 aa).

The Nucleophile role is filled by Asp-13. Mg(2+) contacts are provided by Asp-13 and Asp-15. The active-site Proton donor/acceptor is Asp-15. Arg-22, Arg-124, Arg-135, Arg-142, Ser-180, and Asp-182 together coordinate alpha-D-mannose 1-phosphate. Mg(2+) contacts are provided by Asp-208, Tyr-220, and Thr-225.

The protein belongs to the eukaryotic PMM family. Homodimer. Requires Mg(2+) as cofactor. Expressed in roots, stems, leaves, flowers and immature fruits.

It localises to the cytoplasm. The catalysed reaction is alpha-D-mannose 1-phosphate = D-mannose 6-phosphate. Its pathway is nucleotide-sugar biosynthesis; GDP-alpha-D-mannose biosynthesis; alpha-D-mannose 1-phosphate from D-fructose 6-phosphate: step 2/2. Its function is as follows. Catalyzes the interconversion of mannose-6-phosphate to mannose-1-phosphate, the precursor for the synthesis of GDP-mannose. GDP-mannose is an essential sugar nucleotide for the synthesis of D-mannose-containing cell wall polysaccharides (galactomannans and glucomannans), glycolipids, glycoproteins and the antioxidant L-ascorbate. Can complement the yeast temperature-sensitive mutant sec53-6. In Nicotiana benthamiana, this protein is Phosphomannomutase.